Consider the following 395-residue polypeptide: Protein TAMALIN (395 aa).

The tract at residues 1–52 is disordered; it reads MTLRRLRKLQQKEEAAATPDPAARTPDSEVAPAAPVPTPGPPAAAATPGPPA. A compositionally biased stretch (low complexity) spans 16-33; that stretch reads AATPDPAARTPDSEVAPA. Phosphothreonine is present on T77. Phosphoserine is present on S94. A PDZ domain is found at 101 to 190; sequence VLTLEKEDNQ…VLRLETLYGT (90 aa). The interval 181–258 is interaction with PSCD3; that stretch reads VLRLETLYGT…GAGLLPGSLP (78 aa). A Phosphotyrosine modification is found at Y237. R270 carries the post-translational modification Omega-N-methylarginine. Residues 293–349 form a disordered region; sequence SEPPALPPPPPPARAFGPGPAETPAVGPGPGPRAALSRSASVRCAGPGGGGGGGAPG. The span at 296-305 shows a compositional bias: pro residues; the sequence is PALPPPPPPA. Residues 338-348 show a composition bias toward gly residues; it reads GPGGGGGGGAP. Phosphoserine is present on S387.

In terms of assembly, heteromer. Composed of TAMALIN, CYTH2 and at least one GRM1. Also interacts with CYTH3, GRM2, GRM3 and GRM5.

The protein localises to the cytoplasm. It is found in the perinuclear region. Its subcellular location is the cell membrane. The protein resides in the postsynaptic cell membrane. In terms of biological role, plays a role in intracellular trafficking and contributes to the macromolecular organization of group 1 metabotropic glutamate receptors (mGluRs) at synapses. This Homo sapiens (Human) protein is Protein TAMALIN.